Consider the following 820-residue polypeptide: Probable ATP-dependent RNA helicase DDX23 (820 aa).

Residues 1–42 (MAGELADKKDRDASPSKEERKRSRTPDRERDRDRDRKSSPSK) show a composition bias toward basic and acidic residues. Positions 1–244 (MAGELADKKD…QKIREEKDKS (244 aa)) are disordered. Ser-14 and Ser-16 each carry phosphoserine. Basic residues predominate over residues 43–65 (DRKRHRSRDRRRGGSRSRSRSRS). Basic and acidic residues predominate over residues 66-105 (KSAERERRHKERERDKERDRNKKDRDRDKDGHRRDKDRKR). Residues Ser-107 and Ser-109 each carry the phosphoserine modification. 3 stretches are compositionally biased toward basic and acidic residues: residues 112–137 (RGKD…DKKP), 147–226 (LLAK…RETN), and 233–244 (GRQKIREEKDKS). The Q motif signature appears at 391 to 419 (RSWKDSSLPPHILEVIDKCGYKEPTPIQR). Positions 422–627 (IPIGLQNRDI…RSYLRRPAVV (206 aa)) constitute a Helicase ATP-binding domain. Residue 435 to 442 (AETGSGKT) participates in ATP binding. A DEAD box motif is present at residues 549 to 552 (DEAD). The region spanning 651–799 (KRKKLLAILE…SCPPELANHP (149 aa)) is the Helicase C-terminal domain. Glycyl lysine isopeptide (Lys-Gly) (interchain with G-Cter in SUMO2) cross-links involve residues Lys-686 and Lys-811.

The protein belongs to the DEAD box helicase family. DDX23/PRP28 subfamily. In terms of assembly, the phosphorylated form (by SRPK2) is a component of the U4/U6-U5 tri-snRNP complex composed of the U4, U6 and U5 snRNAs and at least PRPF3, PRPF4, PRPF6, PRPF8, PRPF31, SNRNP200, TXNL4A, WDR57, SNRNP40, DDX23, CD2BP2, PPIH, SNU13, EFTUD2, SART1 and USP39. Identified in the spliceosome C complex. Interacts with ERBB4. Interacts with ERCC6. In terms of processing, in vitro phosphorylated by CLK1 and U1 snRNP-associated protein kinase. Phosphorylated by SRPK2 and this phosphorylation is required for its association with the tri-snRNP (U4/U6-U5 tri-small nuclear ribonucleoproteins) and subsequent spliceosomal B complex formation. May be phosphorylated by SRPK2 on Ser residues in the SR domain; the phosphorylation is required for the removal of inappropriate R-loops during transcription.

Its subcellular location is the nucleus. The protein resides in the chromosome. The catalysed reaction is ATP + H2O = ADP + phosphate + H(+). Functionally, involved in pre-mRNA splicing and its phosphorylated form (by SRPK2) is required for spliceosomal B complex formation. Independently of its spliceosome formation function, required for the suppression of incorrect R-loops formed during transcription; R-loops are composed of a DNA:RNA hybrid and the associated non-template single-stranded DNA. This Homo sapiens (Human) protein is Probable ATP-dependent RNA helicase DDX23.